The primary structure comprises 406 residues: 2,3-bisphosphoglycerate-independent phosphoglycerate mutase (406 aa).

It belongs to the BPG-independent phosphoglycerate mutase family. A-PGAM subfamily.

It carries out the reaction (2R)-2-phosphoglycerate = (2R)-3-phosphoglycerate. The protein operates within carbohydrate degradation; glycolysis; pyruvate from D-glyceraldehyde 3-phosphate: step 3/5. Functionally, catalyzes the interconversion of 2-phosphoglycerate and 3-phosphoglycerate. This chain is 2,3-bisphosphoglycerate-independent phosphoglycerate mutase, found in Methanococcus maripaludis (strain C5 / ATCC BAA-1333).